A 444-amino-acid polypeptide reads, in one-letter code: Bifunctional enolase 2/transcriptional activator (444 aa).

Residues H163 and E172 each contribute to the substrate site. The Proton donor role is filled by E215. The Mg(2+) site is built by D250, E300, and D327. Residues E300 and D327 each coordinate substrate. K352 (proton acceptor) is an active-site residue. Substrate-binding positions include 379–382 (SHRS) and K403.

This sequence belongs to the enolase family. Homodimer. Mg(2+) serves as cofactor.

It is found in the cytoplasm. Its subcellular location is the cytosol. It localises to the nucleus. The protein resides in the mitochondrion outer membrane. It catalyses the reaction (2R)-2-phosphoglycerate = phosphoenolpyruvate + H2O. The protein operates within carbohydrate degradation; glycolysis; pyruvate from D-glyceraldehyde 3-phosphate: step 4/5. Multifunctional enzyme that acts as an enolase involved in the metabolism and as a positive regulator of cold-responsive gene transcription. Binds to the cis-element the gene promoter of STZ/ZAT10, a zinc finger transcriptional repressor. The polypeptide is Bifunctional enolase 2/transcriptional activator (ENO2) (Arabidopsis thaliana (Mouse-ear cress)).